The sequence spans 426 residues: Glutamyl-tRNA reductase (426 aa).

Substrate contacts are provided by residues 49–52 (TCNR), Ser-107, 112–114 (EPQ), and Gln-118. The active-site Nucleophile is Cys-50. 187–192 (GAGETI) contributes to the NADP(+) binding site.

Belongs to the glutamyl-tRNA reductase family. Homodimer.

The enzyme catalyses (S)-4-amino-5-oxopentanoate + tRNA(Glu) + NADP(+) = L-glutamyl-tRNA(Glu) + NADPH + H(+). It functions in the pathway porphyrin-containing compound metabolism; protoporphyrin-IX biosynthesis; 5-aminolevulinate from L-glutamyl-tRNA(Glu): step 1/2. In terms of biological role, catalyzes the NADPH-dependent reduction of glutamyl-tRNA(Glu) to glutamate 1-semialdehyde (GSA). This chain is Glutamyl-tRNA reductase, found in Ectopseudomonas mendocina (strain ymp) (Pseudomonas mendocina).